A 672-amino-acid polypeptide reads, in one-letter code: Protein OS-9 (672 aa).

A signal peptide spans 1–26 (MAAEVLLSSLLGLLFLGLLLPARLTG). Positions 108-230 (APCLLKTKDW…TIRTSRLCPH (123 aa)) constitute an MRH domain. An intrachain disulfide couples C110 to C123. A mannooligosaccharide derivative contacts are provided by W117, W118, and Q130. N-linked (GlcNAc...) asparagine glycosylation is present at N177. Disulfide bonds link C181-C216 and C196-C228. Positions 182, 188, 212, and 218 each coordinate a mannooligosaccharide derivative. 4 disordered regions span residues 261-355 (RQAE…NVQV), 372-452 (KAAE…LLPS), 511-548 (ENQSPELVQKYKKRRVVPQKPPPSPHPTEEEPEHRVRV), and 637-672 (EANKERQRQSELESNYRRVWGSPGGEDTGDLDEFDF). 5 stretches are compositionally biased toward basic and acidic residues: residues 263–281 (AESKQHEEKTTEEVQDTDR), 294–310 (PKKEDVSPAKEEKESEL), 320–338 (AAAREEAQAGEQDLNHEAA), 372–386 (KAAEKGKPSVRREQP), and 394–409 (PQREAEGTKAKGKDGE). The span at 414 to 435 (MEEEDGDDEEEEEEEEEDEEEQ) shows a compositional bias: acidic residues. Residues 637-652 (EANKERQRQSELESNY) show a composition bias toward basic and acidic residues. Over residues 663–672 (DTGDLDEFDF) the composition is skewed to acidic residues.

Belongs to the OS-9 family. In terms of assembly, component of the HRD1 complex, which comprises at least SYNV1/HRD1, DERL1/2, FAM8A1, HERPUD1/HERP, OS9, SEL1L and UBE2J1. FAM8A1 is stabilized by interaction with SYNV1, which prevents its proteasomal degradation. OS9 and UBE2J1 recruitment to the complex may be mediated by SEL1L. Through this complex, may interact with ERLEC1 and HSPA5. Interacts (via C-terminus) with CPNE6 (via second C2 domain); this interaction occurs in a calcium-dependent manner in vitro. Interacts with CREB3. N-glycosylated. Post-translationally, intramolecular disulfide bonds.

It is found in the endoplasmic reticulum lumen. Functionally, lectin component of the HRD1 complex, which functions in endoplasmic reticulum (ER) quality control and ER-associated degradation (ERAD). Specifically recognizes and binds improperly folded glycoproteins as well as hyperglycosylated proteins, retain them in the ER, and transfers them to the ubiquitination machinery and promote their degradation. Possible targets include TRPV4 as well as hyperglycosylated HSP90B1. The sequence is that of Protein OS-9 (Os9) from Mus musculus (Mouse).